The primary structure comprises 966 residues: MLPGRLCLVPLLLALGVGSGGGSGDGGDSRRRRLLVAKVNKHKPWIETSYHGVITENNDTVILDPPLVALDKDAPVPFAGEICAFKIHGQELPFEAVVLNKTSGEGRLRAKSPIDCELQKEYTFIIQAYDCGAGPREAAWKKSHKAVVHIQVKDVNEFAPTFKEPAYKAIVTEGKIYDSILQVEAIDEDCSPQYSQICNYEIVTTDVPFAIDRNGNIRNTEKLSYDKQHQYEILVTAYDCGQKPAAQDTLVQVDVKPVCKPGWQDWTKRIEYQPGSGSMPLFPSIHLETCDGAVSSLQVTAELQTNYIGKGCDRETYSEKSLQKLCGASSGIIDLLPSPSAATNWTAGLLVDSSEMIFKFDGRQGAKIPDGIVPKNLTDQFTITMWMKHGPSPGVRAEKETILCNSDKTEMNRHHYALYVHNCRLVFLLRKDFDQADTFRPAEFHWKLDQICDKEWHYYVINVEFPVVTLYMDGATYEPYLVTNDWPIHPSHIAMQLTVGACWQGGEVAKPRFAQFFHGSLASLTIRPGKMESQKVISCLQACKEGLDINSLESLGRGIKYHFNPSQSILVMEGDDIGNINRALQKVSYINSRQFPTAGVRRLRLSSKVQCFGEDVCISIPDVDAYIMVLQAIEPQITLQGTERFWRPAAQFESARGVTLFPDIKIVSTFAKTEASGDMRATGTAPKSAVLEEMLHNLDFCDILVLGGDLDPRQECLELNHSELHQRHLDATNSTAGYSIYGVGSMNRYEQVLHHLRYRNWHPTSLETRRFRIKCSELNGRYTSNEFNLEVSVLHEVRVSDKEHVNHLIVQPPFLQSVHHPETRSSIQRSSVVPSIATVVIIISVCMLVFVVAMGVYRVRIAHQHFIQETEAAKEAEMDWDDSALTITVNPMEKHEGPGNGEDETTEVEEEEEAEEGSSSSSSGSDDSEEEEEEGMGRVRHGQSGTSSQSPERSTWNTAGVINIWK.

The signal sequence occupies residues 1–20; the sequence is MLPGRLCLVPLLLALGVGSG. The Extracellular segment spans residues 21-835; that stretch reads GGSGDGGDSR…SIQRSSVVPS (815 aa). 2 Cadherin domains span residues 46 to 162 and 163 to 282; these read IETS…APTF and KEPA…MPLF. 2 N-linked (GlcNAc...) asparagine glycosylation sites follow: Asn-58 and Asn-100. N-linked (GlcNAc...) asparagine glycosylation is found at Asn-344, Asn-376, Asn-720, and Asn-733. Residues 836–856 form a helical membrane-spanning segment; sequence IATVVIIISVCMLVFVVAMGV. Over 857-966 the chain is Cytoplasmic; it reads YRVRIAHQHF…NTAGVINIWK (110 aa). Positions 890 to 966 are disordered; that stretch reads NPMEKHEGPG…NTAGVINIWK (77 aa). Positions 901-916 are enriched in acidic residues; the sequence is GEDETTEVEEEEEAEE. Polar residues predominate over residues 943-960; it reads QSGTSSQSPERSTWNTAG.

This sequence belongs to the calsyntenin family. Proteolytically processed under normal cellular conditions. A primary zeta-cleavage generates a large extracellular (soluble) N-terminal domain (sAlc) and a short C-terminal transmembrane fragment (CTF1). A secondary cleavage catalyzed by gamma-secretase within the transmembrane domain releases the beta-Alc-gamma chain in the extracellular milieu and produces an intracellular fragment (AlcICD). This processing is strongly suppressed in the tripartite complex formed with APBA2 and APP, which seems to prevent the association with PSEN1. In terms of tissue distribution, restricted to the brain. In the cerebral cortex, found in the somas and neuropil of all layers. Expressed at highest levels in neurons of cortical layers 5 and 6 and, at lower levels, in neurons of the upper layers. Highly expressed in Purkinje cells. Also found in a few scattered interneurons throughout the granule cell layer and occasionally in neurons in the molecular layer (at protein level). Present throughout all cortical layers, highest levels in GABAergic neurons (based on morphology and distribution pattern).

It is found in the postsynaptic cell membrane. The protein localises to the endoplasmic reticulum membrane. Its subcellular location is the golgi apparatus membrane. The protein resides in the cell projection. It localises to the dendrite. Functionally, postsynaptic adhesion molecule that binds to presynaptic neurexins to mediate synapse formation, and which is involved in learning and memory. Promotes synapse development by acting as a cell adhesion molecule at the postsynaptic membrane, which associates with neurexin-alpha at the presynaptic membrane. The protein is Calsyntenin-2 of Mus musculus (Mouse).